Here is a 367-residue protein sequence, read N- to C-terminus: Popeye domain-containing protein 2 (367 aa).

An N-linked (GlcNAc...) asparagine glycan is attached at asparagine 4. 2 helical membrane-spanning segments follow: residues 36 to 56 and 77 to 97; these read FLLM…LFGI and IVLW…QLVY. Disordered regions lie at residues 273 to 292 and 312 to 367; these read PSAS…ALEA and APPA…TPEL. Over residues 278–290 the composition is skewed to acidic residues; the sequence is GEPESEKDDEEAL. A compositionally biased stretch (polar residues) spans 344–356; sequence PLQNSSQVMSRSQ. Asparagine 347 is a glycosylation site (N-linked (GlcNAc...) asparagine). The residue at position 364 (threonine 364) is a Phosphothreonine.

The protein belongs to the popeye family. As to expression, expressed in the developing and adult heart, with high expression levels in the sinus and atrioventricular nodes. Also expressed in the bladder and skeletal muscle.

It is found in the membrane. The protein localises to the cell membrane. Its subcellular location is the sarcolemma. In terms of biological role, important for the maintenance of cardiac function. Plays a regulatory function in heart rate dynamics mediated, at least in part, through cAMP-binding and, probably, by increasing cell surface expression of the potassium channel KCNK2 and enhancing current density. This chain is Popeye domain-containing protein 2 (Popdc2), found in Mus musculus (Mouse).